A 316-amino-acid chain; its full sequence is MRDIIKDQGLLSFLPQKLDAELVQGSTMVKHAFPIFQKGGVVMDVTNVTQAEIAEDAGATAVMVLDKLPYDVRKSGGVARMADPKIIEEVMNSITIPVMAKVRIGHYYEAKILEALGVDMIDESEVLTPADEEHHINKWEFKVPFVNGARNLGEALRRITEGASMIRTKGEAGTGNVSEAVKHMKIINGEIRSLISMSEEDRMKKAREYQVPYQIVELTVKLGRLPVVNFAAGGIATPADAALMMWLGADGIFVGSGIFKSQDPDVRAKAIVLATANWEDPEIVLEAQKMISESKSMMGIDIKALKPEELLQVRGQ.

Asp44 serves as a coordination point for D-ribose 5-phosphate. The active-site Schiff-base intermediate with D-ribose 5-phosphate is Lys101. Gly173 contributes to the D-ribose 5-phosphate binding site. Lys185 is a binding site for D-glyceraldehyde 3-phosphate. D-ribose 5-phosphate is bound by residues Gly234 and Gly255 to Ser256.

It belongs to the PdxS/SNZ family. As to quaternary structure, in the presence of PdxT, forms a dodecamer of heterodimers.

The enzyme catalyses aldehydo-D-ribose 5-phosphate + D-glyceraldehyde 3-phosphate + L-glutamine = pyridoxal 5'-phosphate + L-glutamate + phosphate + 3 H2O + H(+). The protein operates within cofactor biosynthesis; pyridoxal 5'-phosphate biosynthesis. Functionally, catalyzes the formation of pyridoxal 5'-phosphate from ribose 5-phosphate (RBP), glyceraldehyde 3-phosphate (G3P) and ammonia. The ammonia is provided by the PdxT subunit. Can also use ribulose 5-phosphate and dihydroxyacetone phosphate as substrates, resulting from enzyme-catalyzed isomerization of RBP and G3P, respectively. The protein is Pyridoxal 5'-phosphate synthase subunit PdxS of Sulfurisphaera tokodaii (strain DSM 16993 / JCM 10545 / NBRC 100140 / 7) (Sulfolobus tokodaii).